We begin with the raw amino-acid sequence, 494 residues long: Glycerol kinase (494 aa).

An ADP-binding site is contributed by Thr13. ATP is bound by residues Thr13, Thr14, and Ser15. Thr13 is a binding site for sn-glycerol 3-phosphate. Arg17 is an ADP binding site. Sn-glycerol 3-phosphate is bound by residues Arg83, Glu84, Tyr135, and Asp244. Glycerol contacts are provided by Arg83, Glu84, Tyr135, Asp244, and Gln245. Residues Thr266 and Gly309 each contribute to the ADP site. Positions 266, 309, 313, and 410 each coordinate ATP. Residues Gly410 and Asn414 each coordinate ADP.

The protein belongs to the FGGY kinase family.

The enzyme catalyses glycerol + ATP = sn-glycerol 3-phosphate + ADP + H(+). Its pathway is polyol metabolism; glycerol degradation via glycerol kinase pathway; sn-glycerol 3-phosphate from glycerol: step 1/1. Inhibited by fructose 1,6-bisphosphate (FBP). Functionally, key enzyme in the regulation of glycerol uptake and metabolism. Catalyzes the phosphorylation of glycerol to yield sn-glycerol 3-phosphate. This Shewanella baltica (strain OS185) protein is Glycerol kinase.